Consider the following 505-residue polypeptide: 4-trimethylaminobutyraldehyde dehydrogenase (505 aa).

NAD(+) is bound by residues lysine 191 and 243–247 (GSVPT). The active-site Proton acceptor is glutamate 265. Cysteine 299 functions as the Nucleophile in the catalytic mechanism. Glutamate 402 serves as a coordination point for NAD(+).

It belongs to the aldehyde dehydrogenase family. In terms of assembly, homotetramer. Constitutively expressed in all organs tested: brain, eye, gill, GI, heart, liver, kidney, muscle, skin, testis and ovary.

The protein localises to the cytoplasm. It localises to the cytosol. It catalyses the reaction 4-(trimethylamino)butanal + NAD(+) + H2O = 4-(trimethylamino)butanoate + NADH + 2 H(+). It carries out the reaction an aldehyde + NAD(+) + H2O = a carboxylate + NADH + 2 H(+). It participates in amine and polyamine biosynthesis; carnitine biosynthesis. In terms of biological role, converts gamma-trimethylaminobutyraldehyde into gamma-butyrobetaine with high efficiency (in vitro). Can catalyze the irreversible oxidation of a broad range of aldehydes to the corresponding acids in an NAD-dependent reaction, but with low efficiency. The polypeptide is 4-trimethylaminobutyraldehyde dehydrogenase (aldh9A1) (Oryzias latipes (Japanese rice fish)).